Here is a 205-residue protein sequence, read N- to C-terminus: Ribosomal RNA small subunit methyltransferase G (205 aa).

S-adenosyl-L-methionine-binding positions include G66, F71, 119–120 (IE), and R135.

Belongs to the methyltransferase superfamily. RNA methyltransferase RsmG family.

The protein localises to the cytoplasm. It catalyses the reaction guanosine(527) in 16S rRNA + S-adenosyl-L-methionine = N(7)-methylguanosine(527) in 16S rRNA + S-adenosyl-L-homocysteine. Its function is as follows. Specifically methylates the N7 position of guanine in position 527 of 16S rRNA. The protein is Ribosomal RNA small subunit methyltransferase G of Rhizobium rhizogenes (strain K84 / ATCC BAA-868) (Agrobacterium radiobacter).